The following is a 532-amino-acid chain: Glucose-6-phosphate isomerase (532 aa).

Catalysis depends on E330, which acts as the Proton donor. Catalysis depends on residues H359 and K461.

It belongs to the GPI family.

The protein localises to the cytoplasm. The enzyme catalyses alpha-D-glucose 6-phosphate = beta-D-fructose 6-phosphate. Its pathway is carbohydrate biosynthesis; gluconeogenesis. The protein operates within carbohydrate degradation; glycolysis; D-glyceraldehyde 3-phosphate and glycerone phosphate from D-glucose: step 2/4. Its function is as follows. Catalyzes the reversible isomerization of glucose-6-phosphate to fructose-6-phosphate. In Synechococcus sp. (strain CC9605), this protein is Glucose-6-phosphate isomerase.